The primary structure comprises 516 residues: Calcium and calcium/calmodulin-dependent serine/threonine-protein kinase (516 aa).

Positions 13–298 (YEVVDVLGRG…ASDLLRHPWV (286 aa)) constitute a Protein kinase domain. ATP-binding positions include 19 to 27 (LGRGGFSIV) and K43. D163 (proton acceptor) is an active-site residue. Phosphothreonine is present on T263. Positions 321-334 (ARRKLRAAAIASVL) are calmodulin-binding. Residues 343–363 (KRLRNLLGTHDLTSEELDNLR) adopt a coiled-coil conformation. EF-hand domains lie at 392-427 (SLIP…LRNS), 428-463 (RGDD…LPEE), and 470-505 (TEPG…DSAL). Positions 405, 407, 409, 411, 416, 441, 443, 445, 447, 452, 483, 485, 487, 489, and 494 each coordinate Ca(2+).

Belongs to the protein kinase superfamily. CAMK Ser/Thr protein kinase family. CaMK subfamily. In terms of processing, autophosphorylation. In terms of tissue distribution, mainly expressed in roots and panicles. Detected in leaves, shoots and culms.

The protein resides in the nucleus. The protein localises to the cytoplasm. Its subcellular location is the cell membrane. It catalyses the reaction L-seryl-[protein] + ATP = O-phospho-L-seryl-[protein] + ADP + H(+). The enzyme catalyses L-threonyl-[protein] + ATP = O-phospho-L-threonyl-[protein] + ADP + H(+). Functionally, calcium- and calmodulin-dependent protein kinase required for arbuscular mycorrhizal (AM) symbiosis. Involved in response to water deprivation stress. Required for abscisic acid-induced antioxidant defense and oxidative stress tolerance during dehydration stress. Functions upstream of MPK1 in an abscisic acid signaling pathway that regulates the activities of antioxidant enzymes and the production of hydrogen peroxide. The sequence is that of Calcium and calcium/calmodulin-dependent serine/threonine-protein kinase (CCAMK) from Oryza sativa subsp. japonica (Rice).